The sequence spans 162 residues: NADH-quinone oxidoreductase subunit I (162 aa).

2 4Fe-4S ferredoxin-type domains span residues 54-83 and 93-122; these read RRYE…IESE and TRYD…ETQI. 8 residues coordinate [4Fe-4S] cluster: C63, C66, C69, C73, C102, C105, C108, and C112.

It belongs to the complex I 23 kDa subunit family. In terms of assembly, NDH-1 is composed of 14 different subunits. Subunits NuoA, H, J, K, L, M, N constitute the membrane sector of the complex. [4Fe-4S] cluster serves as cofactor.

Its subcellular location is the cell inner membrane. It carries out the reaction a quinone + NADH + 5 H(+)(in) = a quinol + NAD(+) + 4 H(+)(out). Its function is as follows. NDH-1 shuttles electrons from NADH, via FMN and iron-sulfur (Fe-S) centers, to quinones in the respiratory chain. The immediate electron acceptor for the enzyme in this species is believed to be ubiquinone. Couples the redox reaction to proton translocation (for every two electrons transferred, four hydrogen ions are translocated across the cytoplasmic membrane), and thus conserves the redox energy in a proton gradient. This chain is NADH-quinone oxidoreductase subunit I, found in Burkholderia cenocepacia (strain ATCC BAA-245 / DSM 16553 / LMG 16656 / NCTC 13227 / J2315 / CF5610) (Burkholderia cepacia (strain J2315)).